A 534-amino-acid chain; its full sequence is Arginine--tRNA ligase (534 aa).

Residues 120 to 130 (ANPTGFLHLGH) carry the 'HIGH' region motif.

The protein belongs to the class-I aminoacyl-tRNA synthetase family. Monomer.

Its subcellular location is the cytoplasm. The catalysed reaction is tRNA(Arg) + L-arginine + ATP = L-arginyl-tRNA(Arg) + AMP + diphosphate. The sequence is that of Arginine--tRNA ligase from Mesomycoplasma hyopneumoniae (strain J / ATCC 25934 / NCTC 10110) (Mycoplasma hyopneumoniae).